The sequence spans 215 residues: LexA repressor (215 aa).

Residues 28 to 48 (RAEIAAELGFSSPNAAEEHLR) constitute a DNA-binding region (H-T-H motif). Active-site for autocatalytic cleavage activity residues include S133 and K170.

This sequence belongs to the peptidase S24 family. As to quaternary structure, homodimer.

It carries out the reaction Hydrolysis of Ala-|-Gly bond in repressor LexA.. In terms of biological role, represses a number of genes involved in the response to DNA damage (SOS response), including recA and lexA. In the presence of single-stranded DNA, RecA interacts with LexA causing an autocatalytic cleavage which disrupts the DNA-binding part of LexA, leading to derepression of the SOS regulon and eventually DNA repair. This chain is LexA repressor, found in Burkholderia mallei (strain NCTC 10247).